Reading from the N-terminus, the 91-residue chain is Large ribosomal subunit protein bL27 (91 aa).

Positions 1–22 (MAHKKGQGSSRNGRDSNPQYRG) are disordered. Polar residues predominate over residues 7-19 (QGSSRNGRDSNPQ).

Belongs to the bacterial ribosomal protein bL27 family.

The sequence is that of Large ribosomal subunit protein bL27 from Myxococcus xanthus (strain DK1622).